A 194-amino-acid chain; its full sequence is Cysteine and glycine-rich protein 3 (194 aa).

The interval methionine 1 to glycine 5 is interaction with TCAP. An LIM zinc-binding 1 domain is found at cysteine 10–cysteine 61. Residues arginine 64 to lysine 69 carry the Nuclear localization signal motif. Residues glutamine 94–serine 105 form an interaction with CLF2 region. Phosphoserine is present on residues serine 95, serine 111, and serine 153. The region spanning cysteine 120 to cysteine 171 is the LIM zinc-binding 2 domain.

As to quaternary structure, self-associates. Oligomeric in the cytoplasm and monomeric in the nucleus. Homooligomers preferentially form along the actin cytoskeleton. Interacts with TCAP, ACTN2 and NRAP. Interacts with LDHD, SPTB, MYOD1, MYOG, MYF6. Interacts with GLRX3 (via C-terminus); GLRX3 and calcineurin compete for interaction with CSRP3. Interacts with CFL2; the stoichiometry influences F-actin depolymerization and possibly two molecules of CFL2 can interact with one molecule of CSRP3 resulting in the highest functional impact; the interaction is stronger with phosphorylated CFL2. Phosphorylated by PKC/PRKCA. In terms of tissue distribution, high in striated muscle and adult heart.

Its subcellular location is the nucleus. It is found in the cytoplasm. It localises to the cytoskeleton. The protein resides in the myofibril. The protein localises to the sarcomere. Its subcellular location is the z line. Functionally, positive regulator of myogenesis. Acts as a cofactor for myogenic bHLH transcription factors such as MYOD1, and probably MYOG and MYF6. Enhances the DNA-binding activity of the MYOD1:TCF3 isoform E47 complex and may promote formation of a functional MYOD1:TCF3 isoform E47:MEF2A complex involved in myogenesis. Plays a crucial and specific role in the organization of cytosolic structures in cardiomyocytes. Could play a role in mechanical stretch sensing. May be a scaffold protein that promotes the assembly of interacting proteins at Z-line structures. It is essential for calcineurin anchorage to the Z line. Required for stress-induced calcineurin-NFAT activation. The role in regulation of cytoskeleton dynamics by association with CFL2 is reported conflictingly. Proposed to contribute to the maintenance of muscle cell integrity through an actin-based mechanism. Can directly bind to actin filaments, cross-link actin filaments into bundles without polarity selectivity and protect them from dilution- and cofilin-mediated depolymerization; the function seems to involve its self-association. In vitro can inhibit PKC/PRKCA activity. Proposed to be involved in cardiac stress signaling by down-regulating excessive PKC/PRKCA signaling. The sequence is that of Cysteine and glycine-rich protein 3 (Csrp3) from Rattus norvegicus (Rat).